Consider the following 209-residue polypeptide: Probable E3 ubiquitin-protein ligase NleG7 (209 aa).

Belongs to the NleG E3 ligase family. Two sizes of protein are detected in situ; only the smaller protein is secreted.

It is found in the secreted. The protein localises to the host cytoplasm. It carries out the reaction S-ubiquitinyl-[E2 ubiquitin-conjugating enzyme]-L-cysteine + [acceptor protein]-L-lysine = [E2 ubiquitin-conjugating enzyme]-L-cysteine + N(6)-ubiquitinyl-[acceptor protein]-L-lysine.. Functionally, effector proteins function to alter host cell physiology and promote bacterial survival in host tissues. This protein is probably an E3 ubiquitin-protein ligase that interferes with the host's ubiquitination pathway and targets host proteins for proteasomal degradation. Mice infected with a strain of bacteria deleted for this gene were colonized less quickly by bacteria. The chain is Probable E3 ubiquitin-protein ligase NleG7 from Citrobacter rodentium.